Consider the following 1016-residue polypeptide: Probable outer membrane protein PmpH (1016 aa).

Residues Met1–Ala24 form the signal peptide. Residues Gly697–Phe1016 form the Autotransporter domain.

Belongs to the PMP outer membrane protein family.

The protein resides in the secreted. The protein localises to the cell wall. It localises to the cell outer membrane. The sequence is that of Probable outer membrane protein PmpH (pmpH) from Chlamydia trachomatis serovar D (strain ATCC VR-885 / DSM 19411 / UW-3/Cx).